Here is a 642-residue protein sequence, read N- to C-terminus: Cylicin-1 (642 aa).

Disordered regions lie at residues N167–Y203 and N284–F607. Residues K191–Y203 are compositionally biased toward polar residues. A run of 8 repeats spans residues L294–D313, A314–D344, G345–T391, G392–K432, S433–D464, S465–G500, V501–G526, and R527–G543. A compositionally biased stretch (basic and acidic residues) spans G298–K316. Positions E317–R330 are enriched in basic residues. Residues K353 to D364 are compositionally biased toward basic and acidic residues. The segment covering K388–T404 has biased composition (low complexity). The span at N405 to M416 shows a compositional bias: basic residues. The segment covering A428–E440 has biased composition (basic and acidic residues). The span at S454 to G463 shows a compositional bias: acidic residues. A compositionally biased stretch (basic and acidic residues) spans S465–K488. Low complexity predominate over residues S513–S523. The interval R527–G543 is 8 X approximate tandem repeats.

In terms of assembly, interacts with proteins of spermatozoa head including ACTL7A, CCIN, FAM209 and SPACA1; the interactions may be necessary for proper acrosome attachment to the nuclear envelope. Testis.

It is found in the cytoplasm. The protein resides in the cytoskeleton. Its subcellular location is the perinuclear theca. It localises to the calyx. Plays a role in the establishment of normal sperm morphology during spermatogenesis and is required for acrosome attachment to the nuclear envelope. The sequence is that of Cylicin-1 from Mus musculus (Mouse).